Here is a 150-residue protein sequence, read N- to C-terminus: UPF0756 membrane protein NTHI1233 (150 aa).

A run of 4 helical transmembrane segments spans residues 1–21, 52–72, 81–101, and 123–143; these read MTLQLNTIALLLVILLILGVL, YGVKIGIIILTIGVLSPLVSG, GFLSWKMALSIAVGVLVAWLA, and IIGVAFLGGIPVGPLIAAGIL.

This sequence belongs to the UPF0756 family.

The protein resides in the cell membrane. In Haemophilus influenzae (strain 86-028NP), this protein is UPF0756 membrane protein NTHI1233.